Reading from the N-terminus, the 60-residue chain is UPF0434 protein Ent638_1436 (60 aa).

The protein belongs to the UPF0434 family.

This Enterobacter sp. (strain 638) protein is UPF0434 protein Ent638_1436.